A 247-amino-acid chain; its full sequence is NAD-dependent protein deacetylase (247 aa).

One can recognise a Deacetylase sirtuin-type domain in the interval 1 to 244 (MIYEKVAEEL…PKILENVRQK (244 aa)). Residues Ala22, Thr26, Phe33, Arg34, Gln98, Ile100, Asp101, and His116 each contribute to the NAD(+) site. Phe33 is a nicotinamide binding site. Nicotinamide-binding residues include Ile100 and Asp101. His116 serves as the catalytic Proton acceptor. Zn(2+) is bound by residues Cys124, Cys127, Cys149, and Cys151. Ser187, Ser188, Asn212, and Val230 together coordinate NAD(+).

Belongs to the sirtuin family. Class U subfamily. As to quaternary structure, monomer. Zn(2+) serves as cofactor.

The protein resides in the cytoplasm. It carries out the reaction N(6)-acetyl-L-lysyl-[protein] + NAD(+) + H2O = 2''-O-acetyl-ADP-D-ribose + nicotinamide + L-lysyl-[protein]. Functionally, NAD-dependent protein deacetylase which modulates the activities of several enzymes which are inactive in their acetylated form. Deacetylates the N-terminal lysine residue of albA1, the major archaeal DNA compaction protein and that, in turn, increases albA1's DNA binding affinity, thereby repressing transcription. This is NAD-dependent protein deacetylase from Saccharolobus solfataricus (strain ATCC 35092 / DSM 1617 / JCM 11322 / P2) (Sulfolobus solfataricus).